Consider the following 314-residue polypeptide: 3'-5' exoribonuclease YhaM (314 aa).

The HD domain maps to 163 to 279; it reads HVVSMLDLAK…LHYIDNLDAK (117 aa).

This sequence belongs to the YhaM family.

Shows a 3'-5' exoribonuclease activity. The sequence is that of 3'-5' exoribonuclease YhaM from Bacillus cereus (strain AH187).